The sequence spans 672 residues: Penicillin-binding protein activator LpoA (672 aa).

An N-terminal signal peptide occupies residues 1–26 (MLPFHLVRTQAGRVIPVLLAALFLAG). Cys-27 carries the N-palmitoyl cysteine lipid modification. Cys-27 carries S-diacylglycerol cysteine lipidation. The segment at 298–336 (APPTDTAQAGQVTPSSDGQNAQSPAPYSDQAVASTTPAP) is disordered. Residues 305–322 (QAGQVTPSSDGQNAQSPA) show a composition bias toward polar residues. Residues 327–336 (QAVASTTPAP) are compositionally biased toward low complexity.

The protein belongs to the LpoA family. In terms of assembly, interacts with PBP1a.

The protein resides in the cell outer membrane. In terms of biological role, regulator of peptidoglycan synthesis that is essential for the function of penicillin-binding protein 1A (PBP1a). In Pectobacterium parmentieri (strain WPP163) (Pectobacterium wasabiae (strain WPP163)), this protein is Penicillin-binding protein activator LpoA.